Reading from the N-terminus, the 398-residue chain is E3 ubiquitin-protein ligase RSL1 (398 aa).

The tract at residues 155-374 (QKETCNICLN…LDLTQCCGSC (220 aa)) is TRIAD supradomain. 14 residues coordinate Zn(2+): Cys-159, Cys-162, Cys-183, Cys-186, Cys-246, Cys-251, Cys-271, Cys-274, Cys-279, Cys-282, His-287, Cys-292, Cys-321, and Cys-324. An RING-type 3; degenerate zinc finger spans residues 159 to 207 (CNICLNDDINADQMFSVDKSGHMCCSECVKRHIEVRLLEGSLITCPHYR). The RING-type 1 zinc-finger motif lies at 159-208 (CNICLNDDINADQMFSVDKSGHMCCSECVKRHIEVRLLEGSLITCPHYRC). Residues 233–292 (TKDELIPVMDRVYCPNPRCSTLMSETELSGLNIGVRRCCVKCGEPFCVKCKVSWHNNLSC) form an IBR-type zinc finger. An RING-type 2; atypical zinc finger spans residues 321–349 (CSKCKHMIELSSGCISVVCRCGHTFCYQC). An RING-type 4; degenerate zinc finger spans residues 321–356 (CSKCKHMIELSSGCISVVCRCGHTFCYQCGADAGDC). Cys-334 is a catalytic residue. The Zn(2+) site is built by Cys-339, Cys-341, Cys-346, Cys-349, His-358, and Cys-370. Residues 374–394 (CCCFVFFLVIIAIVVTIILLV) traverse the membrane as a helical segment.

The protein belongs to the RBR family. Interacts with the PYL4 and PYR1 ABA receptors at the plasma membrane. Requires Zn(2+) as cofactor.

It localises to the cell membrane. Its subcellular location is the vacuole membrane. The catalysed reaction is [E2 ubiquitin-conjugating enzyme]-S-ubiquitinyl-L-cysteine + [acceptor protein]-L-lysine = [E2 ubiquitin-conjugating enzyme]-L-cysteine + [acceptor protein]-N(6)-ubiquitinyl-L-lysine.. The protein operates within protein modification; protein ubiquitination. Acts as an E3 ubiquitin-protein ligase, or as part of E3 complex, which accepts ubiquitin from specific E2 ubiquitin-conjugating enzymes and then transfers it to substrates. Negative regulator of the abscisic acid (ABA) signaling pathway which targets PYL4 and PYR1 ABA receptors in plasma membrane to promote their FREE1/FYVE1-dependent trafficking and degradation upon ubiquitynation; this process involves clathrin-mediated endocytosis and trafficking through the ESCRT pathway. Involved in the maintenance of seed longevity. May enhance gibberellins responses. The protein is E3 ubiquitin-protein ligase RSL1 of Arabidopsis thaliana (Mouse-ear cress).